A 684-amino-acid chain; its full sequence is MKNLPGVFAFPDNETIFAHAYSQRELEAMLPARAGAQPHAFAYAAWPLSKHRWRGAFVCRQRGVLKLNLELDAGAFERVPRSEAERFEPEQSDARALMHRGADGTVMSFECYSFLRCRPGLELREAGLALLRGLVVGGNRMRIFSGVRRAGASAATSAGMLGNESPFERAPFASLRIDAQAALFRAWAARRPTVVTGGTGVGKTSQVPKLLLWFNYLFGGTEDLDVLAPARERPVVLSLPRVALVRMNGHALRRALGFDALEGSPVELRYGDLAPADANSSRSPFRLVVSTNQLTLGALFAHGTVILDEVHEHDQMADIMLAVLRVHRARVDSIVLMSATLEDDRERLQEFFPDAEFVHIPGSTRFEIRGVYVRNSSDPRDARAYDEEERRNVSAALSAHRPRAGRCGILFVASVAQCEDYARLLTREHPELGVYVVHGKTPNVDALLAEVYASARPCVLVSTPYLESSVTIRTVTHVYDTGRVFVPAPFGGRQMLISPAMRTQRRGRVGRVMPGTYVYFYDPARLAPIKRIDSEFLYNYIIYARHYGLVLPDDLYVQPSDLELLRRCEEYLDGFGLAPERLFELASTRYLRMVEYAKIYARGGARAEELNRFERDGVVTEDVLASIRALNLRARVLSARARRGQFLHTCEVAFGPYAGTRFLLANRRRLRGDIFMVTERSFVL.

In terms of domain architecture, Helicase ATP-binding spans 184 to 359 (FRAWAARRPT…EFFPDAEFVH (176 aa)). 197–204 (GGTGVGKT) serves as a coordination point for ATP. Positions 308–311 (DEVH) match the DEXH box motif. The region spanning 392–563 (NVSAALSAHR…DLYVQPSDLE (172 aa)) is the Helicase C-terminal domain.

It belongs to the DEAD box helicase family. DEAH subfamily. In terms of assembly, monomer.

The protein resides in the virion. It catalyses the reaction ATP + H2O = ADP + phosphate + H(+). NTP-dependent helicase that catalyzes unidirectional unwinding of 3'tailed duplex RNAs and plays an important role during transcription of early mRNAs, presumably by preventing R-loop formation behind the elongating RNA polymerase. Might also play a role in the export of newly synthesized mRNA chains out of the core into the cytoplasm. Required for replication and propagation of viral particles. The sequence is that of RNA helicase NPH-II (NPH2) from Homo sapiens (Human).